We begin with the raw amino-acid sequence, 151 residues long: Cytochrome c-type biogenesis protein CcmE (151 aa).

Residues 1-8 (MNPLRRKR) lie on the Cytoplasmic side of the membrane. A helical; Signal-anchor for type II membrane protein transmembrane segment spans residues 9-29 (LLIILAILVGVGIAVGLALSA). Residues 30–151 (LQQNINLFYT…QSAPTPAKEG (122 aa)) lie on the Periplasmic side of the membrane. Heme is bound by residues H124 and Y128.

It belongs to the CcmE/CycJ family.

It is found in the cell inner membrane. Heme chaperone required for the biogenesis of c-type cytochromes. Transiently binds heme delivered by CcmC and transfers the heme to apo-cytochromes in a process facilitated by CcmF and CcmH. The sequence is that of Cytochrome c-type biogenesis protein CcmE from Pseudomonas fluorescens (strain SBW25).